We begin with the raw amino-acid sequence, 215 residues long: Urease accessory protein UreG (215 aa).

Residue 24–31 coordinates GTP; that stretch reads GPVGSGKT.

It belongs to the SIMIBI class G3E GTPase family. UreG subfamily. In terms of assembly, homodimer. UreD, UreF and UreG form a complex that acts as a GTP-hydrolysis-dependent molecular chaperone, activating the urease apoprotein by helping to assemble the nickel containing metallocenter of UreC. The UreE protein probably delivers the nickel.

The protein localises to the cytoplasm. Its function is as follows. Facilitates the functional incorporation of the urease nickel metallocenter. This process requires GTP hydrolysis, probably effectuated by UreG. The polypeptide is Urease accessory protein UreG (Burkholderia cenocepacia (strain HI2424)).